A 152-amino-acid polypeptide reads, in one-letter code: SsrA-binding protein (152 aa).

Belongs to the SmpB family.

The protein resides in the cytoplasm. Functionally, required for rescue of stalled ribosomes mediated by trans-translation. Binds to transfer-messenger RNA (tmRNA), required for stable association of tmRNA with ribosomes. tmRNA and SmpB together mimic tRNA shape, replacing the anticodon stem-loop with SmpB. tmRNA is encoded by the ssrA gene; the 2 termini fold to resemble tRNA(Ala) and it encodes a 'tag peptide', a short internal open reading frame. During trans-translation Ala-aminoacylated tmRNA acts like a tRNA, entering the A-site of stalled ribosomes, displacing the stalled mRNA. The ribosome then switches to translate the ORF on the tmRNA; the nascent peptide is terminated with the 'tag peptide' encoded by the tmRNA and targeted for degradation. The ribosome is freed to recommence translation, which seems to be the essential function of trans-translation. This is SsrA-binding protein from Rickettsia bellii (strain RML369-C).